Reading from the N-terminus, the 185-residue chain is Putative gustatory receptor clone PTE01 (185 aa).

A helical membrane pass occupies residues 1–11; sequence MYLFLSNLSLA. At 12–42 the chain is on the extracellular side; that stretch reads DISFTSTTLPKMIVDIQTNNRAISYSGCLTQ. A helical membrane pass occupies residues 43 to 62; it reads MSFFMLFGCLDSLLLTAMAY. Residues 63-84 lie on the Cytoplasmic side of the membrane; it reads DRFVAICHPLHYQVIMNPRLCG. A helical transmembrane segment spans residues 85-105; sequence LLVFLSILISLLVSQLHNSVV. The Extracellular portion of the chain corresponds to 106 to 138; sequence LQLTYFKSVDISHFFCDPSLLLNLACSDTFTNN. A helical transmembrane segment spans residues 139-160; it reads IVMYFVGAISGFLPISGIFFSY. Residues 161–182 are Cytoplasmic-facing; the sequence is YKIVSSILRMPSPGGKYKAFST. Residues 183 to 185 form a helical membrane-spanning segment; that stretch reads CGS.

It belongs to the G-protein coupled receptor 1 family. As to expression, tongue specific.

It is found in the cell membrane. Functionally, possible taste receptor. The polypeptide is Putative gustatory receptor clone PTE01 (Rattus norvegicus (Rat)).